The primary structure comprises 502 residues: Mannitol 2-dehydrogenase (502 aa).

37–48 (IVHIGVGGFHRA) lines the NAD(+) pocket.

This sequence belongs to the mannitol dehydrogenase family. In terms of assembly, monomer.

It catalyses the reaction D-mannitol + NAD(+) = D-fructose + NADH + H(+). Catalyzes the NAD(H)-dependent interconversion of D-fructose and D-mannitol in the mannitol metabolic pathway. This chain is Mannitol 2-dehydrogenase, found in Emericella nidulans (strain FGSC A4 / ATCC 38163 / CBS 112.46 / NRRL 194 / M139) (Aspergillus nidulans).